The following is a 505-amino-acid chain: Glucose-6-phosphate 1-dehydrogenase (505 aa).

At Ser2 the chain carries N-acetylserine. NADP(+) is bound by residues 18–25 (GASGDLAK) and Arg52. At Ser142 the chain carries Phosphoserine. At Tyr145 the chain carries Phosphotyrosine. Lys157 lines the NADP(+) pocket. D-glucose 6-phosphate is bound by residues Lys157, 187–191 (HYLGK), Glu225, and Asp244. Residue His249 is the Proton acceptor of the active site. Position 340 (Arg340) interacts with NADP(+). D-glucose 6-phosphate is bound at residue Lys343. NADP(+)-binding residues include Lys349, Arg353, and Arg375. Gln377 is a D-glucose 6-phosphate binding site. NADP(+)-binding positions include 383–385 (YLK) and Arg470.

It belongs to the glucose-6-phosphate dehydrogenase family.

It carries out the reaction D-glucose 6-phosphate + NADP(+) = 6-phospho-D-glucono-1,5-lactone + NADPH + H(+). It participates in carbohydrate degradation; pentose phosphate pathway; D-ribulose 5-phosphate from D-glucose 6-phosphate (oxidative stage): step 1/3. Functionally, catalyzes the rate-limiting step of the oxidative pentose-phosphate pathway, which represents a route for the dissimilation of carbohydrates besides glycolysis. The main function of this enzyme is to provide reducing power (NADPH) and pentose phosphates for fatty acid and nucleic acid synthesis. This is Glucose-6-phosphate 1-dehydrogenase (ZWF1) from Saccharomyces cerevisiae (strain ATCC 204508 / S288c) (Baker's yeast).